We begin with the raw amino-acid sequence, 137 residues long: Cofilin-1A (137 aa).

Positions Ser-2–Thr-135 constitute an ADF-H domain.

The protein belongs to the actin-binding proteins ADF family.

The protein localises to the nucleus matrix. Its subcellular location is the cytoplasm. It is found in the cytoskeleton. In terms of biological role, controls reversibly actin polymerization and depolymerization in a pH-sensitive manner. It has the ability to bind G- and F-actin in a 1:1 ratio of cofilin to actin. It is the major component of intranuclear and cytoplasmic actin rods. The chain is Cofilin-1A (cofA) from Dictyostelium discoideum (Social amoeba).